Consider the following 110-residue polypeptide: QVRPFLDVYQRSACQARETLVSILQEYPDEISDIFRPSCVAVLRCSGCCTDESLKCTPVGKHTVDMQIMRVNPRTQSSKMEVMKFTEHTACECRPRRKQGEPDGPKEKPR.

Position 1 is a pyrrolidone carboxylic acid (Gln-1). 3 disulfide bridges follow: Cys-14-Cys-56, Cys-45-Cys-91, and Cys-49-Cys-93.

Belongs to the PDGF/VEGF growth factor family. Snake venom VEGF subfamily. In terms of assembly, homodimer; disulfide-linked. As to expression, expressed by the venom gland.

The protein localises to the secreted. Snake venom VEGFs that may contribute to venom dispersion and prey subjugation by inducing vascular permeability and hypotension. This protein potently stimulates dermal human microvascular endothelial cell (dHMVEC) proliferation in a VEGFR-2 dependent manner. This stimulatory effect is correlated with activation of the MAPK Erk1/2 signaling pathway. It also appears to be a chemoattractant for migration of these cells and stimulates their radial migration in a collagen gel. In vivo, it induces angiogenesis in a Japanese quail assay. This pro-angiogenic effect may also be related to its interaction with VEGFR-2. In addition, it may induce an increase in capillary permeability after intradermal injection, as well as a drastic hypotensive effect after intravenous injection. The hypotension is mediated by nitric oxide (NO), which is produced by VEGF-activated endothelium NO synthase. In Daboia palaestinae (Palestine viper), this protein is Snake venom vascular endothelial growth factor toxin.